A 434-amino-acid polypeptide reads, in one-letter code: MDYLDLGPYSSASGTVRLPGSKSISNRVLLLAALAEGDTTITNLLDSDDTRVMLDALGKLGVKLARDGDTCVVTGTRGAFTAKTADLFLGNAGTAVRPLTAALAINGGDYRVHGVPRMHERPIGDLVDGLRQIGAQIDYEQNEGFPPLRIKPGTISVDAPIRVRGDVSSQFLTALLMTLPLVKAKDGRTVVEIDGELISKPYIDITIRLMERFGVTVERDGWQRFVVPAGVRYRSPGRIMVEGDASSASYFLAAGALGGGPLRVEGVGRASIQGDVGFANALMQMGANVSMGDDWIEVRGIGHDHGKLDPIDMDFNLIPDAAMTIAVAALFASGTSTLRNIASWRVKETDRIAAMATELRKVGAIVEEGADYLVVTPPQRLTPNAAIDTYDDHRMAMCFSLVSLGGVPVRINDPKCVGKTFPDYFNRFAALAKA.

K22, S23, and R27 together coordinate 3-phosphoshikimate. K22 serves as a coordination point for phosphoenolpyruvate. Phosphoenolpyruvate is bound by residues G93 and R121. Residues S168, S169, Q170, S199, D320, and K347 each contribute to the 3-phosphoshikimate site. Residue Q170 participates in phosphoenolpyruvate binding. D320 serves as the catalytic Proton acceptor. Phosphoenolpyruvate-binding residues include R351, R394, and K419.

It belongs to the EPSP synthase family. As to quaternary structure, monomer.

Its subcellular location is the cytoplasm. It catalyses the reaction 3-phosphoshikimate + phosphoenolpyruvate = 5-O-(1-carboxyvinyl)-3-phosphoshikimate + phosphate. It functions in the pathway metabolic intermediate biosynthesis; chorismate biosynthesis; chorismate from D-erythrose 4-phosphate and phosphoenolpyruvate: step 6/7. Catalyzes the transfer of the enolpyruvyl moiety of phosphoenolpyruvate (PEP) to the 5-hydroxyl of shikimate-3-phosphate (S3P) to produce enolpyruvyl shikimate-3-phosphate and inorganic phosphate. The chain is 3-phosphoshikimate 1-carboxyvinyltransferase from Burkholderia ambifaria (strain ATCC BAA-244 / DSM 16087 / CCUG 44356 / LMG 19182 / AMMD) (Burkholderia cepacia (strain AMMD)).